The primary structure comprises 188 residues: Elongation factor P-like protein (188 aa).

Belongs to the elongation factor P family.

The polypeptide is Elongation factor P-like protein (Vibrio parahaemolyticus serotype O3:K6 (strain RIMD 2210633)).